The sequence spans 360 residues: MPRLLIAASGTGGHLFPALAVADRMPETWSVRWLGVPDRLERQLVPSRYPLFTVRAGGLQGRGLRKLKQLIQLLWSAWPVTRLIRKQECAVVFTTGGYIAAPAILAARLCRRPVVLHESNAIPGQVTRLFGRFCSRVALGLPQAADYLSGCRPEVTGTPVREDFLKPAACPDWVPAGDGPLLLVIGGSQGAVGLNRMVRAAAPALLAMGCRIVHLSGHVDPDQGQLEHPAYSERPFSEEIPALLQHADLAISRAGAGSLSELAVCGTPAVLVPFPQAADDHQSANAAAAAAVGAAVIVAQHGPNEPGLRRMLWNLLGPRLRGCDPAADPLRLLRQGMERLAVRDADRLLSQLLQDLAAEA.

Residues 11-13 (TGG), Asn120, Arg161, Ser188, and Gln282 each bind UDP-N-acetyl-alpha-D-glucosamine.

The protein belongs to the glycosyltransferase 28 family. MurG subfamily.

It is found in the cell inner membrane. The catalysed reaction is di-trans,octa-cis-undecaprenyl diphospho-N-acetyl-alpha-D-muramoyl-L-alanyl-D-glutamyl-meso-2,6-diaminopimeloyl-D-alanyl-D-alanine + UDP-N-acetyl-alpha-D-glucosamine = di-trans,octa-cis-undecaprenyl diphospho-[N-acetyl-alpha-D-glucosaminyl-(1-&gt;4)]-N-acetyl-alpha-D-muramoyl-L-alanyl-D-glutamyl-meso-2,6-diaminopimeloyl-D-alanyl-D-alanine + UDP + H(+). The protein operates within cell wall biogenesis; peptidoglycan biosynthesis. Functionally, cell wall formation. Catalyzes the transfer of a GlcNAc subunit on undecaprenyl-pyrophosphoryl-MurNAc-pentapeptide (lipid intermediate I) to form undecaprenyl-pyrophosphoryl-MurNAc-(pentapeptide)GlcNAc (lipid intermediate II). The polypeptide is UDP-N-acetylglucosamine--N-acetylmuramyl-(pentapeptide) pyrophosphoryl-undecaprenol N-acetylglucosamine transferase (Synechococcus sp. (strain RCC307)).